Here is a 546-residue protein sequence, read N- to C-terminus: Glucose-6-phosphate isomerase 1 (546 aa).

The active-site Proton donor is E353. Catalysis depends on residues H384 and K512.

It belongs to the GPI family.

The protein resides in the cytoplasm. The catalysed reaction is alpha-D-glucose 6-phosphate = beta-D-fructose 6-phosphate. It participates in carbohydrate biosynthesis; gluconeogenesis. Its pathway is carbohydrate degradation; glycolysis; D-glyceraldehyde 3-phosphate and glycerone phosphate from D-glucose: step 2/4. Functionally, catalyzes the reversible isomerization of glucose-6-phosphate to fructose-6-phosphate. This Colwellia psychrerythraea (strain 34H / ATCC BAA-681) (Vibrio psychroerythus) protein is Glucose-6-phosphate isomerase 1.